Here is a 1170-residue protein sequence, read N- to C-terminus: Glucose transport transcription regulator RGT1 (1170 aa).

Polar residues predominate over residues 1-22 (MNELNTVSTNSSDSTKNGGTSN). The tract at residues 1-46 (MNELNTVSTNSSDSTKNGGTSNSPDDMDSAAAASHAIKKRTKASRA) is disordered. Residues 47 to 76 (CDQCRKKKIKCDYKDEKGVCSNCQRNGDRC) constitute a DNA-binding region (zn(2)-C6 fungal-type). A disordered region spans residues 77–148 (SFDRVPLKRG…VPSTPSRSNS (72 aa)). The segment covering 99-108 (RTNEIQDHNN) has biased composition (basic and acidic residues). The span at 113 to 138 (NTFDNSNNTLNNNTGNSGDNGINSNT) shows a compositional bias: low complexity. Positions 139-148 (VPSTPSRSNS) are enriched in polar residues. Phosphoserine is present on residues Ser202, Ser205, Ser208, and Ser229. Over residues 217 to 234 (PNEQLSYNTVQQSPITNK) the composition is skewed to polar residues. 6 disordered regions span residues 217-254 (PNEQLSYNTVQQSPITNKHTNDSGNANGSVTGSGSASG), 269-288 (APTDDHNGEQTRRSSSIPSL), 293-343 (SNSL…PSIS), 384-506 (AQQT…HPMT), 725-757 (DEEANTGNGNTKTSEFEIGSESAGHMNPSNSPN), and 946-974 (RPPNPPANNPTVQEGPSAMGSSPVAGNLN). A compositionally biased stretch (low complexity) spans 239-250 (SGNANGSVTGSG). Over residues 271-280 (TDDHNGEQTR) the composition is skewed to basic and acidic residues. Phosphoserine is present on residues Ser283 and Ser284. Low complexity-rich tracts occupy residues 293–302 (SNSLLLGGQP), 309–341 (QQSQPQAHQQKLQQGQNPYSYSQFSQQQPYNPS), and 385–397 (QQTQRPQGQQVPQ). Residues Ser410 and Ser414 each carry the phosphoserine modification. The span at 411–422 (APVSVTLSTDRL) shows a compositional bias: polar residues. The span at 424–444 (GNENNNGEINNNNGSNNSGSS) shows a compositional bias: low complexity. A compositionally biased stretch (polar residues) spans 445–457 (KDTSQHSQESVTT). The segment covering 473–488 (STKKRRKSYVSKKTKP) has biased composition (basic residues). Residues 493–506 (SISITSKDSAHPMT) are compositionally biased toward polar residues. Ser1130 carries the post-translational modification Phosphoserine.

It belongs to the EDS1/RGT1 family. Glucose-induced phosphorylation regulates the DNA-binding activity. Hyperphosphorylation in cells growing on high levels of glucose does prevents DNA-binding and dephosphorylation restores DNA-binding ability.

It is found in the nucleus. It localises to the cytoplasm. Functionally, glucose-responsive transcription factor that regulates expression of several glucose transporter (HXT) genes in response to glucose. In the absence of glucose, it functions as a transcriptional repressor, whereas high concentrations of glucose cause it to function as a transcriptional activator. In cells growing on low levels of glucose, has a neutral role, neither repressing nor activating transcription. Binds the consensus binding site sequence 5'-CGGANNA-3', of which multiple copies are present in all HXT promoters regulated by RGT1. The chain is Glucose transport transcription regulator RGT1 (RGT1) from Saccharomyces cerevisiae (strain YJM789) (Baker's yeast).